A 116-amino-acid polypeptide reads, in one-letter code: Putative antiporter subunit mnhC2 (116 aa).

3 consecutive transmembrane segments (helical) span residues 3 to 23 (LILL…ILSV), 28 to 48 (IVIG…SMGN), and 72 to 92 (AIVL…LVLV).

This sequence belongs to the CPA3 antiporters (TC 2.A.63) subunit C family. May form a heterooligomeric complex that consists of seven subunits: mnhA2, mnhB2, mnhC2, mnhD2, mnhE2, mnhF2 and mnhG2.

Its subcellular location is the cell membrane. The protein is Putative antiporter subunit mnhC2 (mnhC2) of Staphylococcus saprophyticus subsp. saprophyticus (strain ATCC 15305 / DSM 20229 / NCIMB 8711 / NCTC 7292 / S-41).